Reading from the N-terminus, the 467-residue chain is Glycine--tRNA ligase (467 aa).

Residues Arg100 and Glu175 each coordinate substrate. Residues 207 to 209 (RNE), 217 to 222 (FRTREF), 291 to 292 (EL), and 335 to 338 (GADR) contribute to the ATP site. 222–226 (FEQME) contributes to the substrate binding site. Position 331–335 (331–335 (EPSLG)) interacts with substrate.

It belongs to the class-II aminoacyl-tRNA synthetase family. In terms of assembly, homodimer.

It localises to the cytoplasm. The enzyme catalyses tRNA(Gly) + glycine + ATP = glycyl-tRNA(Gly) + AMP + diphosphate. Functionally, catalyzes the attachment of glycine to tRNA(Gly). This chain is Glycine--tRNA ligase, found in Clostridium perfringens (strain 13 / Type A).